A 341-amino-acid chain; its full sequence is Protein-glutamate methylesterase/protein-glutamine glutaminase 2 (341 aa).

The 114-residue stretch at 7-120 (KTLIVDDSLL…NRDLDSFFSE (114 aa)) folds into the Response regulatory domain. 4-aspartylphosphate is present on D58. Residues 155–341 (VIAIGASTGG…QALYKLINQL (187 aa)) form the CheB-type methylesterase domain. Active-site residues include S161, H187, and D283.

The protein belongs to the CheB family. Phosphorylated by CheA. Phosphorylation of the N-terminal regulatory domain activates the methylesterase activity.

It is found in the cytoplasm. It catalyses the reaction [protein]-L-glutamate 5-O-methyl ester + H2O = L-glutamyl-[protein] + methanol + H(+). The catalysed reaction is L-glutaminyl-[protein] + H2O = L-glutamyl-[protein] + NH4(+). In terms of biological role, involved in chemotaxis. Part of a chemotaxis signal transduction system that modulates chemotaxis in response to various stimuli. Catalyzes the demethylation of specific methylglutamate residues introduced into the chemoreceptors (methyl-accepting chemotaxis proteins or MCP) by CheR. Also mediates the irreversible deamidation of specific glutamine residues to glutamic acid. The polypeptide is Protein-glutamate methylesterase/protein-glutamine glutaminase 2 (Syntrophomonas wolfei subsp. wolfei (strain DSM 2245B / Goettingen)).